The following is a 631-amino-acid chain: Probable G-protein coupled receptor 153 (631 aa).

Residues Met1 to Ala11 are Extracellular-facing. Residues Val12 to Val32 form a helical membrane-spanning segment. Residues Gly33 to Pro41 are Cytoplasmic-facing. A helical membrane pass occupies residues Leu42–Ala62. Over Thr63–Lys84 the chain is Extracellular. A helical transmembrane segment spans residues Val85–Ser105. The Cytoplasmic segment spans residues Tyr106–Gln126. A helical membrane pass occupies residues Ala127–Val147. Residues Gly148–Arg162 are Extracellular-facing. The helical transmembrane segment at Phe163–Ser183 threads the bilayer. Topologically, residues Val184–Thr243 are cytoplasmic. The chain crosses the membrane as a helical span at residues Gly244–Val264. Over Ser265–Pro276 the chain is Extracellular. A helical transmembrane segment spans residues Trp277–Leu297. The Cytoplasmic portion of the chain corresponds to Trp298–Ser631. Disordered stretches follow at residues Leu486–Ser518, Gln546–Ala590, and Cys603–Ser631. Low complexity predominate over residues Ser605 to Ser617.

This sequence belongs to the G-protein coupled receptor 1 family.

It is found in the cell membrane. Orphan receptor. In Mus musculus (Mouse), this protein is Probable G-protein coupled receptor 153 (Gpr153).